The primary structure comprises 658 residues: NADPH-dependent diflavin oxidoreductase 1 (658 aa).

A Flavodoxin-like domain is found at 16–160 (LTILYMTQTG…ELGPWMNRFW (145 aa)). FMN contacts are provided by residues 22 to 27 (TQTGTS), 69 to 72 (STTG), 107 to 116 (LGDSTYPRFC), and Asp-142. One can recognise an FAD-binding FR-type domain in the interval 215–502 (QGWSISILDK…IKPGYLTLPP (288 aa)). Residues Arg-400, 430-433 (REFS), and 474-477 (GLCT) each bind FAD. NADP(+) is bound by residues Thr-514, 574–575 (SR), and 580–584 (KTYVQ). Residue Trp-657 participates in FAD binding.

Belongs to the NADPH-dependent diflavin oxidoreductase NDOR1 family. It in the N-terminal section; belongs to the flavodoxin family. The protein in the C-terminal section; belongs to the flavoprotein pyridine nucleotide cytochrome reductase family. As to quaternary structure, interacts with DRE2; as part of the cytosolic iron-sulfur (Fe-S) protein assembly (CIA) machinery. The cofactor is FAD. It depends on FMN as a cofactor.

The protein localises to the cytoplasm. It is found in the mitochondrion. It carries out the reaction 2 oxidized [2Fe-2S]-[protein] + NADPH = 2 reduced [2Fe-2S]-[protein] + NADP(+) + H(+). NADPH-dependent reductase which is a central component of the cytosolic iron-sulfur (Fe-S) protein assembly (CIA) machinery. Transfers electrons from NADPH via its FAD and FMN prosthetic groups to the [2Fe-2S] cluster of DRE2, another key component of the CIA machinery. In turn, this reduced cluster provides electrons for assembly of cytosolic iron-sulfur cluster proteins. Positively controls H(2)O(2)-induced cell death. The polypeptide is NADPH-dependent diflavin oxidoreductase 1 (Mycosarcoma maydis (Corn smut fungus)).